Consider the following 125-residue polypeptide: MGLTGTMLVLVSLAFFGSAAAHNCQNGTRPASEQDREGCDYYCWNAETKSWDQFFFGNGEKCFYNSGDHGTCQNGECHLTNNSGGPNETDDYTPAPTEKPKQKKKKTKKTKKPKRKSKKDQEKNL.

Residues 1–21 form the signal peptide; it reads MGLTGTMLVLVSLAFFGSAAA. Residues Asn-26, Asn-81, and Asn-87 are each glycosylated (N-linked (GlcNAc...) asparagine). Polar residues predominate over residues 75–86; the sequence is GECHLTNNSGGP. A disordered region spans residues 75–125; the sequence is GECHLTNNSGGPNETDDYTPAPTEKPKQKKKKTKKTKKPKRKSKKDQEKNL. The tract at residues 91–125 is responsible for anticoagulant activity; that stretch reads DYTPAPTEKPKQKKKKTKKTKKPKRKSKKDQEKNL. Residues 101-118 are compositionally biased toward basic residues; it reads KQKKKKTKKTKKPKRKSK.

The protein belongs to the salp14 family. As to expression, salivary gland (at protein level). Saliva (at protein level).

It localises to the secreted. Functionally, salivary anticoagulant protein that facilitates blood feeding of adult ticks on vertebrate species. Inhibits host coagulation factor Xa (F10). Blocks the assembly and/or early activity of the prothrombinase complex (Xa-Va/F10-F5). Inhibits the lectin pathway of complement system activation in the host. In Ixodes scapularis (Black-legged tick), this protein is Anticoagulant salivary protein 14.